Reading from the N-terminus, the 84-residue chain is Cryptic plasmid protein A (84 aa).

The chain is Cryptic plasmid protein A (cppA) from Neisseria gonorrhoeae.